The following is a 108-amino-acid chain: Urease subunit gamma (108 aa).

The protein belongs to the urease gamma subunit family. Heterotrimer of UreA (gamma), UreB (beta) and UreC (alpha) subunits. Three heterotrimers associate to form the active enzyme.

Its subcellular location is the cytoplasm. It carries out the reaction urea + 2 H2O + H(+) = hydrogencarbonate + 2 NH4(+). Its pathway is nitrogen metabolism; urea degradation; CO(2) and NH(3) from urea (urease route): step 1/1. This chain is Urease subunit gamma, found in Trichodesmium erythraeum (strain IMS101).